A 608-amino-acid chain; its full sequence is Zinc finger protein 652 (608 aa).

Residue Ser57 is modified to Phosphoserine. Positions 61 to 232 (VLADTKMSKP…KRATKEAKAP (172 aa)) are disordered. A compositionally biased stretch (basic and acidic residues) spans 71 to 97 (HLHETEEQPYFREPRAVSDVHTVKEDR). Acidic residues-rich tracts occupy residues 98–108 (ENSDDTEEEEE) and 151–162 (EEDEEETEEEAT). Phosphoserine is present on Ser100. Phosphothreonine is present on Thr103. The segment covering 194-208 (AASAAAATTSPAPRT) has biased composition (low complexity). A phosphoserine mark is found at Ser196 and Ser203. The segment at 244-267 (LTCEKCPRVFNTRWYLEKHMNVTH) adopts a C2H2-type 1 zinc-finger fold. The C2H2-type 2; degenerate zinc finger occupies 271 to 293 (QICDKCGKKFVLESELSLHQQTD). C2H2-type zinc fingers lie at residues 298–321 (IQCV…KIVH), 328–350 (FACE…MVAH), 356–378 (FTCE…SLQH), 384–406 (FRCE…MSIH), 412–434 (FMCQ…MKTH), and 440–462 (FICE…RRTH). The C2H2-type 9; degenerate zinc finger occupies 468–491 (YPCDVCGQRFRFSNMLKAHKEKCF). The mediates interaction with CBFA2T3 stretch occupies residues 497–608 (VNVPPAVQIP…KNSAAPAQHH (112 aa)).

The protein belongs to the krueppel C2H2-type zinc-finger protein family. Interacts with CBFA2T3.

It is found in the nucleus. In terms of biological role, functions as a transcriptional repressor. In Mus musculus (Mouse), this protein is Zinc finger protein 652 (Znf652).